Consider the following 610-residue polypeptide: Mitochondrial import receptor subunit TOM70 (610 aa).

Ala2 carries the N-acetylalanine modification. Topologically, residues 2–41 (AASKPVEAAMAAAAAPASGNGVGSSGGTAAPGSGAGTLPR) are mitochondrial intermembrane. A helical transmembrane segment spans residues 42–62 (WHVALAIGAPLLLGAGAMYLW). The Cytoplasmic portion of the chain corresponds to 63–610 (SRRRRRREAG…KKYGLKPPTL (548 aa)). The disordered stretch occupies residues 69–109 (REAGGRGDASGLKRNSERKTPEGRASPALGSGPDGSGDSLE). Arg74 is subject to Omega-N-methylarginine. Over residues 93–108 (ASPALGSGPDGSGDSL) the composition is skewed to low complexity. Phosphoserine is present on residues Ser94, Ser99, Ser104, Ser107, and Ser112. TPR repeat units lie at residues 116–149 (AQAAKNKGNKYFKAGKYEQAIQCYTEAISLCPTE) and 155–188 (STFYQNRAAAFEQLQKWKEVAQDCTKAVELNPKY). Lys187 is subject to N6-acetyllysine. Lys277 is covalently cross-linked (Glycyl lysine isopeptide (Lys-Gly) (interchain with G-Cter in SUMO2)). TPR repeat units lie at residues 296-329 (ENSGYLKAKQYMEEENYDKIISECSKEIDAQGKY), 331-364 (AEALLLRATFYLLIGSANAAKPDLDKVISLKEAN), 369-402 (ANALIKRGTMCMQQQQPMLSTQDFNMAAEIDPMN), 403-436 (SDVYHHRGQLKILLDLVEEAVADFDACIRLRPKF), 444-477 (CFALYRQAYTANNSSQVQAAMKGFEEVIKKFPRC), 478-511 (AEGYALYAQALTDQQQFGKADEMYDKCIDLEPDN), 513-546 (TTYVHKGLLQLQWKQDLDKGLELISKAIEIDNKC), and 547-580 (DFAYETMGTIEVQRGNMEKAIDMFNKAINLAKSE).

Belongs to the Tom70 family. In terms of assembly, forms part of the preprotein translocase complex of the outer mitochondrial membrane (TOM complex) which consists of at least 7 different proteins (TOMM5, TOMM6, TOMM7, TOMM20, TOMM22, TOMM40 and TOMM70). Interacts with CAPN8. Interacts with TRADD, TRAF6 and STING. Interacts with MAVS. Interacts with HSPA8 and HSP90AA1; both interactions are required for preprotein mitochondrial import. The interaction with HSP90AA1 is direct and mediates the association of TOMM70 with IRF3 and TBK1. Upon mitochondrial depolarization, interacts with PINK1; the interaction is required for PINK1-TOM-TIM23 supercomplex formation which is critical for PINK1 stabilization at the outer mitochondrial membrane, kinase activation and downstream mitophagy.

It is found in the mitochondrion outer membrane. In terms of biological role, acts as a receptor of the preprotein translocase complex of the outer mitochondrial membrane (TOM complex). Recognizes and mediates the translocation of mitochondrial preproteins from the cytosol into the mitochondria in a chaperone dependent manner. Mediates TBK1 and IRF3 activation induced by MAVS in response to Sendai virus infection and promotes host antiviral responses during virus infection. The polypeptide is Mitochondrial import receptor subunit TOM70 (Rattus norvegicus (Rat)).